The primary structure comprises 411 residues: Glutamate dehydrogenase A (411 aa).

The active site involves Lys-102.

Belongs to the Glu/Leu/Phe/Val dehydrogenases family.

It catalyses the reaction L-glutamate + NAD(+) + H2O = 2-oxoglutarate + NH4(+) + NADH + H(+). It carries out the reaction L-glutamate + NADP(+) + H2O = 2-oxoglutarate + NH4(+) + NADPH + H(+). This chain is Glutamate dehydrogenase A (GDHA), found in Nicotiana plumbaginifolia (Leadwort-leaved tobacco).